We begin with the raw amino-acid sequence, 127 residues long: Small ribosomal subunit protein uS11 (127 aa).

Belongs to the universal ribosomal protein uS11 family. As to quaternary structure, part of the 30S ribosomal subunit. Interacts with proteins S7 and S18. Binds to IF-3.

Located on the platform of the 30S subunit, it bridges several disparate RNA helices of the 16S rRNA. Forms part of the Shine-Dalgarno cleft in the 70S ribosome. This chain is Small ribosomal subunit protein uS11, found in Anaeromyxobacter sp. (strain Fw109-5).